We begin with the raw amino-acid sequence, 399 residues long: Carbamoyl phosphate synthase small chain (399 aa).

The tract at residues 1–206 (MTQTIPSPKP…NKGYKTNNDA (206 aa)) is CPSase. L-glutamine contacts are provided by serine 60, glycine 258, and glycine 260. The 189-residue stretch at 210–398 (HIVAIDYGIK…FNLIMDYKKT (189 aa)) folds into the Glutamine amidotransferase type-1 domain. The active-site Nucleophile is the cysteine 287. L-glutamine-binding residues include leucine 288, glutamine 291, asparagine 329, glycine 331, and phenylalanine 332. Active-site residues include histidine 371 and glutamate 373.

Belongs to the CarA family. Composed of two chains; the small (or glutamine) chain promotes the hydrolysis of glutamine to ammonia, which is used by the large (or ammonia) chain to synthesize carbamoyl phosphate. Tetramer of heterodimers (alpha,beta)4.

The catalysed reaction is hydrogencarbonate + L-glutamine + 2 ATP + H2O = carbamoyl phosphate + L-glutamate + 2 ADP + phosphate + 2 H(+). It catalyses the reaction L-glutamine + H2O = L-glutamate + NH4(+). The protein operates within amino-acid biosynthesis; L-arginine biosynthesis; carbamoyl phosphate from bicarbonate: step 1/1. It participates in pyrimidine metabolism; UMP biosynthesis via de novo pathway; (S)-dihydroorotate from bicarbonate: step 1/3. Small subunit of the glutamine-dependent carbamoyl phosphate synthetase (CPSase). CPSase catalyzes the formation of carbamoyl phosphate from the ammonia moiety of glutamine, carbonate, and phosphate donated by ATP, constituting the first step of 2 biosynthetic pathways, one leading to arginine and/or urea and the other to pyrimidine nucleotides. The small subunit (glutamine amidotransferase) binds and cleaves glutamine to supply the large subunit with the substrate ammonia. This is Carbamoyl phosphate synthase small chain from Bartonella henselae (strain ATCC 49882 / DSM 28221 / CCUG 30454 / Houston 1) (Rochalimaea henselae).